We begin with the raw amino-acid sequence, 360 residues long: S-adenosylmethionine-dependent nucleotide dehydratase RSAD2 (360 aa).

The disordered stretch occupies residues 44-71 (KGQPRVRGEPKETQETHEDPGSAQPTTP). Positions 49–63 (VRGEPKETQETHEDP) are enriched in basic and acidic residues. Positions 68 to 288 (PTTPVSVNYH…LQRHKDVSCL (221 aa)) constitute a Radical SAM core domain. Residues cysteine 82, cysteine 86, and cysteine 89 each coordinate [4Fe-4S] cluster. Lysine 196 is subject to N6-acetyllysine. Lysine 205 is covalently cross-linked (Glycyl lysine isopeptide (Lys-Gly) (interchain with G-Cter in ubiquitin)).

The protein belongs to the radical SAM superfamily. RSAD2 family. Homodimer. Interacts with IRAK1 and TRAF6. Interacts with FPPS. Interacts with HADHB. Interacts (via C-terminus) with VAPA/VAP33 (via C-terminus). [4Fe-4S] cluster serves as cofactor. Post-translationally, acetylated by HAT1. HAT1-mediated acetylation of Lys-196 in turn recruits UBE4A that stimulates RSAD2 polyubiquitination leading to proteasomal degradation. 'Lys-6'-linked polyubiquitination at Lys-205 leads to RSAD2 protein degradation. In terms of tissue distribution, in neonatal rat tibia, specifically localized in cells of the periosteum, in osteoblasts lining endosteal and peristeal bone surfaces, to articular surfaces of cartilage and in perichondral cells but not in chondrocytes (at protein level). Expressed predominantly in bone marrow and spleen.

The protein localises to the endoplasmic reticulum membrane. Its subcellular location is the golgi apparatus. It localises to the endoplasmic reticulum. The protein resides in the lipid droplet. It is found in the mitochondrion. The protein localises to the mitochondrion inner membrane. Its subcellular location is the mitochondrion outer membrane. It catalyses the reaction CTP + AH2 + S-adenosyl-L-methionine = 3'-deoxy-3',4'-didehydro-CTP + 5'-deoxyadenosine + L-methionine + A + H2O + H(+). Its activity is regulated as follows. IRAK1 and TRAF6 synergistically activate RSAD2 increasing its activity with CTP as substrate about 10-fold. Interferon-inducible antiviral protein which plays a major role in the cell antiviral state induced by type I and type II interferon. Catalyzes the conversion of cytidine triphosphate (CTP) to 3'-deoxy-3',4'-didehydro-CTP (ddhCTP) via a SAM-dependent radical mechanism. In turn, ddhCTP acts as a chain terminator for the RNA-dependent RNA polymerases from multiple viruses and directly inhibits viral replication. Therefore, inhibits a wide range of DNA and RNA viruses. Also promotes TLR7 and TLR9-dependent production of IFN-beta production in plasmacytoid dendritic cells (pDCs) by facilitating 'Lys-63'-linked ubiquitination of IRAK1 by TRAF6. Plays a role in CD4+ T-cells activation and differentiation. Facilitates T-cell receptor (TCR)-mediated GATA3 activation and optimal T-helper 2 (Th2) cytokine production by modulating NFKB1 and JUNB activities. Can inhibit secretion of soluble proteins. This chain is S-adenosylmethionine-dependent nucleotide dehydratase RSAD2, found in Rattus norvegicus (Rat).